Reading from the N-terminus, the 143-residue chain is Nucleoside diphosphate kinase (143 aa).

ATP is bound by residues Lys11, Phe59, Arg87, Thr93, Arg104, and Asn114. His117 serves as the catalytic Pros-phosphohistidine intermediate.

This sequence belongs to the NDK family. In terms of assembly, homotetramer. It depends on Mg(2+) as a cofactor.

The protein resides in the cytoplasm. The enzyme catalyses a 2'-deoxyribonucleoside 5'-diphosphate + ATP = a 2'-deoxyribonucleoside 5'-triphosphate + ADP. It carries out the reaction a ribonucleoside 5'-diphosphate + ATP = a ribonucleoside 5'-triphosphate + ADP. Its function is as follows. Major role in the synthesis of nucleoside triphosphates other than ATP. The ATP gamma phosphate is transferred to the NDP beta phosphate via a ping-pong mechanism, using a phosphorylated active-site intermediate. This chain is Nucleoside diphosphate kinase, found in Psychrobacter cryohalolentis (strain ATCC BAA-1226 / DSM 17306 / VKM B-2378 / K5).